Consider the following 299-residue polypeptide: Protoheme IX farnesyltransferase (299 aa).

The next 8 membrane-spanning stretches (helical) occupy residues 24-44, 46-66, 94-114, 118-138, 146-166, 172-192, 232-252, and 278-298; these read VVALMMLTAVVGMLLASDQGM, WNALILGNLGIALLASSAAAI, VHALTFAFSLAVVGMAILAWG, LTAWLTLASLIGYAVVYTLFL, IVLGGLAGAAPPLLGWTSVTG, ALLLVLIIFAWTPPHFWALAV, LPFITGMCGWIYFVAALALGV, and ITYLMLLFVALLADHYIPVTL.

It belongs to the UbiA prenyltransferase family. Protoheme IX farnesyltransferase subfamily.

Its subcellular location is the cell inner membrane. It carries out the reaction heme b + (2E,6E)-farnesyl diphosphate + H2O = Fe(II)-heme o + diphosphate. It participates in porphyrin-containing compound metabolism; heme O biosynthesis; heme O from protoheme: step 1/1. In terms of biological role, converts heme B (protoheme IX) to heme O by substitution of the vinyl group on carbon 2 of heme B porphyrin ring with a hydroxyethyl farnesyl side group. This chain is Protoheme IX farnesyltransferase, found in Hahella chejuensis (strain KCTC 2396).